Here is a 319-residue protein sequence, read N- to C-terminus: 1-aminocyclopropane-1-carboxylate oxidase (319 aa).

The Fe2OG dioxygenase domain occupies 153–253 (PTFGTKVSNY…RMSIASFYNP (101 aa)). His-177, Asp-179, and His-234 together coordinate Fe cation.

This sequence belongs to the iron/ascorbate-dependent oxidoreductase family. It depends on Fe cation as a cofactor.

The catalysed reaction is 1-aminocyclopropane-1-carboxylate + L-ascorbate + O2 = ethene + L-dehydroascorbate + hydrogen cyanide + CO2 + 2 H2O. It functions in the pathway alkene biosynthesis; ethylene biosynthesis via S-adenosyl-L-methionine; ethylene from S-adenosyl-L-methionine: step 2/2. This is 1-aminocyclopropane-1-carboxylate oxidase (ACO) from Actinidia deliciosa (Kiwi).